The primary structure comprises 573 residues: E3 ubiquitin-protein ligase TRIM23 (573 aa).

The RING-type; degenerate zinc-finger motif lies at 31 to 76 (CGVCEDVFSLQGDKVPRLLLCGHTVCHDCLTRLPLHGRAIRCPFDR). Residues 122–168 (ESIIRCDEDEAHVASVYCTVCATHLCSECSQVTHSTKTLAKHRRVPL) form a B box-type; degenerate zinc finger. Residues 351–378 (RVVLAKQEITRLLETLQKQQQQFTEVAD) adopt a coiled-coil conformation. Positions 390–573 (FTKDNRVYHG…LVAAGVLDVA (184 aa)) are ARF-like. Residues 411–418 (LDGAGKTT), 454–458 (VGGKH), and 513–516 (KQDV) each bind GTP.

This sequence in the C-terminal section; belongs to the small GTPase superfamily. Arf family. As to quaternary structure, homodimer. Interacts with PSCD1. Interacts with UBE2D2. Interacts with TBK1 (via N-terminal kinase domain) and p62/SQSTM1.

The protein localises to the cytoplasm. Its subcellular location is the endomembrane system. The protein resides in the golgi apparatus membrane. It is found in the lysosome membrane. It catalyses the reaction S-ubiquitinyl-[E2 ubiquitin-conjugating enzyme]-L-cysteine + [acceptor protein]-L-lysine = [E2 ubiquitin-conjugating enzyme]-L-cysteine + N(6)-ubiquitinyl-[acceptor protein]-L-lysine.. Its pathway is protein modification; protein ubiquitination. Its function is as follows. Acts as an E3 ubiquitin-protein ligase. Plays an essential role in autophagy activation during viral infection. Mechanistically, activates TANK-binding kinase 1/TBK1 by facilitating its dimerization and ability to phosphorylate the selective autophagy receptor SQSTM1. In order to achieve this function, TRIM23 mediates 'Lys-27'-linked auto-ubiquitination of its ADP-ribosylation factor (ARF) domain to induce its GTPase activity and its recruitment to autophagosomes. This is E3 ubiquitin-protein ligase TRIM23 (Trim23) from Rattus norvegicus (Rat).